A 323-amino-acid chain; its full sequence is Formyltetrahydrofolate deformylase 1, mitochondrial (323 aa).

Residues 1–25 (MIRRITERASGFAKNIPILKSSRFH) constitute a mitochondrion transit peptide. In terms of domain architecture, ACT spans 41 to 124 (VHVFHCQDAV…SVVRVPSIDP (84 aa)). The active site involves aspartate 267.

This sequence belongs to the PurU family. As to expression, expressed in leaves, cotyledons, roots, seeds and flowers.

It is found in the mitochondrion. It carries out the reaction (6R)-10-formyltetrahydrofolate + H2O = (6S)-5,6,7,8-tetrahydrofolate + formate + H(+). Functionally, deformylase involved in photorespiration. Prevents excessive accumulation of 5-formyl tetrahydrofolate (THF), a potent inhibitor of the Gly decarboxylase/Ser hydroxymethyltransferase complex. The chain is Formyltetrahydrofolate deformylase 1, mitochondrial (PURU1) from Arabidopsis thaliana (Mouse-ear cress).